A 216-amino-acid chain; its full sequence is NADH-quinone oxidoreductase subunit C (216 aa).

This sequence belongs to the complex I 30 kDa subunit family. NDH-1 is composed of 14 different subunits. Subunits NuoB, C, D, E, F, and G constitute the peripheral sector of the complex.

Its subcellular location is the cell inner membrane. It catalyses the reaction a quinone + NADH + 5 H(+)(in) = a quinol + NAD(+) + 4 H(+)(out). Its function is as follows. NDH-1 shuttles electrons from NADH, via FMN and iron-sulfur (Fe-S) centers, to quinones in the respiratory chain. The immediate electron acceptor for the enzyme in this species is believed to be ubiquinone. Couples the redox reaction to proton translocation (for every two electrons transferred, four hydrogen ions are translocated across the cytoplasmic membrane), and thus conserves the redox energy in a proton gradient. The protein is NADH-quinone oxidoreductase subunit C of Francisella tularensis subsp. holarctica (strain FTNF002-00 / FTA).